The following is a 456-amino-acid chain: uncharacterized protein (456 aa).

The 164-residue stretch at isoleucine 277–lysine 440 folds into the YrdC-like domain.

This is an uncharacterized protein from Mycoplasma genitalium (strain ATCC 33530 / DSM 19775 / NCTC 10195 / G37) (Mycoplasmoides genitalium).